The primary structure comprises 156 residues: Small ribosomal subunit protein uS7 (156 aa).

The protein belongs to the universal ribosomal protein uS7 family. In terms of assembly, part of the 30S ribosomal subunit. Contacts proteins S9 and S11.

Functionally, one of the primary rRNA binding proteins, it binds directly to 16S rRNA where it nucleates assembly of the head domain of the 30S subunit. Is located at the subunit interface close to the decoding center, probably blocks exit of the E-site tRNA. The chain is Small ribosomal subunit protein uS7 from Erythrobacter litoralis (strain HTCC2594).